Consider the following 374-residue polypeptide: Putative C-&gt;U-editing enzyme APOBEC-4 (374 aa).

In terms of domain architecture, CMP/dCMP-type deaminase spans 60-176 (PQTKHLTFYE…AWNRKALQSL (117 aa)). His-92 serves as a coordination point for Zn(2+). Catalysis depends on Glu-94, which acts as the Proton donor. Residues Cys-126 and Cys-133 each coordinate Zn(2+). The interval 259–280 (EKHPLGSAAPAQRQPTRGQDPR) is disordered.

Belongs to the cytidine and deoxycytidylate deaminase family. Requires Zn(2+) as cofactor. As to expression, predominantly expressed in testis.

Putative C to U editing enzyme whose physiological substrate is not yet known. This is Putative C-&gt;U-editing enzyme APOBEC-4 (Apobec4) from Mus musculus (Mouse).